Consider the following 128-residue polypeptide: Large ribosomal subunit protein bL17 (128 aa).

Belongs to the bacterial ribosomal protein bL17 family. As to quaternary structure, part of the 50S ribosomal subunit. Contacts protein L32.

The sequence is that of Large ribosomal subunit protein bL17 from Ehrlichia ruminantium (strain Gardel).